We begin with the raw amino-acid sequence, 296 residues long: Phosphatidylglycerol--prolipoprotein diacylglyceryl transferase (296 aa).

The next 4 helical transmembrane spans lie at 10 to 30 (IAFS…LAAF), 57 to 77 (LLFY…MLFY), 92 to 112 (VWEG…ACGL), and 119 to 139 (LHFF…LGFG). Arg140 is a binding site for a 1,2-diacyl-sn-glycero-3-phospho-(1'-sn-glycerol). 3 helical membrane-spanning segments follow: residues 194 to 214 (QLYE…TFSM), 220 to 240 (YAVS…VEFV), and 255 to 275 (LTMG…LLAL).

Belongs to the Lgt family.

The protein resides in the cell inner membrane. The catalysed reaction is L-cysteinyl-[prolipoprotein] + a 1,2-diacyl-sn-glycero-3-phospho-(1'-sn-glycerol) = an S-1,2-diacyl-sn-glyceryl-L-cysteinyl-[prolipoprotein] + sn-glycerol 1-phosphate + H(+). It functions in the pathway protein modification; lipoprotein biosynthesis (diacylglyceryl transfer). In terms of biological role, catalyzes the transfer of the diacylglyceryl group from phosphatidylglycerol to the sulfhydryl group of the N-terminal cysteine of a prolipoprotein, the first step in the formation of mature lipoproteins. The sequence is that of Phosphatidylglycerol--prolipoprotein diacylglyceryl transferase from Xanthomonas campestris pv. campestris (strain 8004).